Reading from the N-terminus, the 48-residue chain is Sulfide dehydrogenase [flavocytochrome c] flavoprotein chain (48 aa).

FAD is bound at residue 40-46 (VTCPFSN).

In terms of assembly, dimer of one cytochrome and one flavoprotein.

Its subcellular location is the periplasm. It catalyses the reaction hydrogen sulfide + 2 Fe(III)-[cytochrome c] = sulfur + 2 Fe(II)-[cytochrome c] + H(+). This Chlorobaculum thiosulfatiphilum (Chlorobium limicola f.sp. thiosulfatophilum) protein is Sulfide dehydrogenase [flavocytochrome c] flavoprotein chain.